We begin with the raw amino-acid sequence, 469 residues long: Cytosolic beta-glucosidase (469 aa).

Positions 17, 120, and 164 each coordinate substrate. Catalysis depends on glutamate 165, which acts as the Proton donor. Tyrosine 309 contributes to the substrate binding site. Glutamate 373 (nucleophile) is an active-site residue. Residues tryptophan 417 and 424–425 (EW) each bind substrate.

It belongs to the glycosyl hydrolase 1 family. Klotho subfamily. As to quaternary structure, may interact with NEU2. In terms of processing, the N-terminus is blocked. In terms of tissue distribution, present in small intestine (at protein level). Expressed in liver, small intestine, colon, spleen and kidney. Down-regulated in renal cell carcinomas and hepatocellular carcinomas.

It localises to the cytoplasm. Its subcellular location is the cytosol. It carries out the reaction Hydrolysis of terminal, non-reducing beta-D-glucosyl residues with release of beta-D-glucose.. The catalysed reaction is a beta-D-glucosyl-(1&lt;-&gt;1')-N-acylsphing-4-enine + H2O = an N-acylsphing-4-enine + D-glucose. The enzyme catalyses a beta-D-galactosyl-(1&lt;-&gt;1')-N-acylsphing-4-enine + H2O = an N-acylsphing-4-enine + D-galactose. It catalyses the reaction beta-D-glucosyl-(1&lt;-&gt;1)-sphing-4-enine + H2O = sphing-4-enine + D-glucose. It carries out the reaction beta-D-glucosyl-(1&lt;-&gt;1)-N-octadecanoylsphing-4-enine + H2O = N-octadecanoylsphing-4-enine + D-glucose. The catalysed reaction is beta-D-galactosyl-(1&lt;-&gt;1)-sphing-4-enine + H2O = sphing-4-enine + D-galactose. The enzyme catalyses beta-D-galactosyl-(1&lt;-&gt;1')-N-octadecanoylsphing-4-enine + H2O = N-octadecanoylsphing-4-enine + D-galactose. It catalyses the reaction a beta-D-xylosyl-(1&lt;-&gt;1')-N-acylsphing-4-enine + cholesterol = cholesteryl 3-beta-D-xyloside + an N-acylsphing-4-enine. Its activity is regulated as follows. Inhibited by 2,4-dinitrophenyl-2-fluoro-2-deoxy-beta-D-glucopyranoside. Inhibited by sodium taurocholate. Inhibited by alpha-1-C-nonyl-DIX/AnDIX. The glucosylceramidase activity is slightly inhibited by conduritol B epoxide/CBE while the galactosylceramidase activity is not. In terms of biological role, neutral cytosolic beta-glycosidase with a broad substrate specificity that could play a role in the catabolism of glycosylceramides. Has a significant glucosylceramidase activity in vitro. However, that activity is relatively low and its significance in vivo is not clear. Hydrolyzes galactosylceramides/GalCers, glucosylsphingosines/GlcSphs and galactosylsphingosines/GalSphs. However, the in vivo relevance of these activities is unclear. It can also hydrolyze a broad variety of dietary glycosides including phytoestrogens, flavonols, flavones, flavanones and cyanogens in vitro and could therefore play a role in the metabolism of xenobiotics. Possesses transxylosylase activity in vitro using xylosylated ceramides/XylCers (such as beta-D-xylosyl-(1&lt;-&gt;1')-N-acylsphing-4-enine) as xylosyl donors and cholesterol as acceptor. Could also play a role in the catabolism of cytosolic sialyl free N-glycans. This is Cytosolic beta-glucosidase from Homo sapiens (Human).